A 253-amino-acid polypeptide reads, in one-letter code: MRLKGVLALFSFFTAIPIKSNASLEEIAEYSYISPLIIGISLALIESAVYVLLYRILEALAGIVLLGVVELLRGFNHLDGLLDLGDALMIKGDRERKIKALKDVEIGSGGIGLLLVYLSIQIVALLKLGFSFYTIFHLISSNVLSMTIGLYILSTISPIPESNLGKIFHNKLKGKSTVLLLELIPFISLYNIIVFLVFYMIMHKICRSLGGSSGDIAGASITLSFPLFLLTNEITNLNYSLLSILCYLFLHLH.

A run of 4 helical transmembrane segments spans residues 33-53 (ISPL…YVLL), 106-126 (IGSG…VALL), 132-152 (FYTI…GLYI), and 178-198 (VLLL…FLVF).

It belongs to the CobS family. It depends on Mg(2+) as a cofactor.

It is found in the cell membrane. The catalysed reaction is alpha-ribazole + adenosylcob(III)inamide-GDP = adenosylcob(III)alamin + GMP + H(+). It catalyses the reaction alpha-ribazole 5'-phosphate + adenosylcob(III)inamide-GDP = adenosylcob(III)alamin 5'-phosphate + GMP + H(+). It participates in cofactor biosynthesis; adenosylcobalamin biosynthesis; adenosylcobalamin from cob(II)yrinate a,c-diamide: step 7/7. Joins adenosylcobinamide-GDP and alpha-ribazole to generate adenosylcobalamin (Ado-cobalamin). Also synthesizes adenosylcobalamin 5'-phosphate from adenosylcobinamide-GDP and alpha-ribazole 5'-phosphate. The polypeptide is Adenosylcobinamide-GDP ribazoletransferase (Saccharolobus islandicus (strain Y.G.57.14 / Yellowstone #1) (Sulfolobus islandicus)).